A 602-amino-acid chain; its full sequence is Cytokine-like nuclear factor N-PAC (602 aa).

Phosphoserine occurs at positions 8 and 10. The PWWP domain occupies 22-81 (PKDLIWAKMKGFTPWPGMIVDPPLDLLSQQRRANTKCVFFFGSRNFAWIEENNIKPFEGP). The interval 162–262 (GSPDEGDGLD…ASSTPTGRRR (101 aa)) is disordered. 3 stretches are compositionally biased toward polar residues: residues 176 to 188 (ADSSASPVTSPAV), 204 to 217 (AATSVKSTKGSAKS), and 224 to 233 (SAQQSPSGPS). A phosphoserine mark is found at Ser-224, Ser-228, and Ser-243. Residues 309–602 (RDIVPSEQTF…SSAVFVRSRF (294 aa)) form a dehydrogenase domain region. NAD(+)-binding positions include 319-333 (GFLGLGMMGSTIVKD), Thr-411, and Arg-554.

This sequence belongs to the HIBADH-related family. NP60 subfamily. In terms of assembly, binds to mononucleosomes. Interacts with male-specific lethal (MSL) histone acetyltransferase complex at least composed of mof, msl-1, msl-2 and msl-3.

Its subcellular location is the chromosome. In terms of biological role, nucleosome-destabilizing factor that is recruited to genes during transcriptional activation and colocalizes with a subset of trimethylated 'Lys-36' histone H3 (H3K36me3)-enriched regions. Binds DNA (in vitro). Facilitates Pol II transcription through nucleosomes. Facilitates male-specific lethal (MSL) histone acetyltransferase complex targeting to active genes on the X chromosome. Stimulates the acetylation of 'Lys-56' of nucleosomal histone H3 (H3K56ac) by nej. May have oxidoreductase activity. This Drosophila melanogaster (Fruit fly) protein is Cytokine-like nuclear factor N-PAC.